The chain runs to 451 residues: Uronate isomerase (451 aa).

It belongs to the metallo-dependent hydrolases superfamily. Uronate isomerase family.

It catalyses the reaction D-glucuronate = D-fructuronate. It carries out the reaction aldehydo-D-galacturonate = keto-D-tagaturonate. It participates in carbohydrate metabolism; pentose and glucuronate interconversion. The sequence is that of Uronate isomerase from Thermotoga sp. (strain RQ2).